A 63-amino-acid polypeptide reads, in one-letter code: Large ribosomal subunit protein bL28 (63 aa).

It belongs to the bacterial ribosomal protein bL28 family.

This is Large ribosomal subunit protein bL28 from Dictyoglomus thermophilum (strain ATCC 35947 / DSM 3960 / H-6-12).